Consider the following 472-residue polypeptide: Arginine biosynthesis bifunctional protein ArgJ, mitochondrial (472 aa).

Positions 200, 229, 240, 327, 467, and 472 each coordinate substrate. The active-site Nucleophile is the threonine 240.

This sequence belongs to the ArgJ family. Heterodimer of an alpha and a beta chain. The alpha and beta chains are autoproteolytically processed from a single precursor protein within the mitochondrion.

It localises to the mitochondrion matrix. It catalyses the reaction N(2)-acetyl-L-ornithine + L-glutamate = N-acetyl-L-glutamate + L-ornithine. The catalysed reaction is L-glutamate + acetyl-CoA = N-acetyl-L-glutamate + CoA + H(+). It functions in the pathway amino-acid biosynthesis; L-arginine biosynthesis; L-ornithine and N-acetyl-L-glutamate from L-glutamate and N(2)-acetyl-L-ornithine (cyclic): step 1/1. Its pathway is amino-acid biosynthesis; L-arginine biosynthesis; N(2)-acetyl-L-ornithine from L-glutamate: step 1/4. Catalyzes two activities which are involved in the cyclic version of arginine biosynthesis: the synthesis of acetylglutamate from glutamate and acetyl-CoA, and of ornithine by transacetylation between acetylornithine and glutamate. This chain is Arginine biosynthesis bifunctional protein ArgJ, mitochondrial, found in Talaromyces marneffei (strain ATCC 18224 / CBS 334.59 / QM 7333) (Penicillium marneffei).